A 1492-amino-acid chain; its full sequence is Putative leucine-rich repeat-containing protein DDB_G0290503 (1492 aa).

In terms of domain architecture, PH spans 2-111 (SILLEGYLEK…WIEGIKDAIK (110 aa)). 21 LRR repeats span residues 123 to 144 (LDGL…IKHL), 180 to 204 (IKSL…VEKL), 258 to 284 (QESL…QFEK), 329 to 351 (KNQF…SIVD), 352 to 375 (DKLK…EIDN), 389 to 413 (ISKI…SIDK), 439 to 462 (LEKL…ILEI), 519 to 543 (INEL…NQSS), 551 to 575 (LNQL…IIER), 579 to 603 (IDQL…NESS), 632 to 656 (INEL…NQSS), 728 to 752 (LDEL…NQSS), 806 to 830 (LKSL…NQDS), 831 to 855 (LDEL…NQSS), 895 to 919 (INEL…NESS), 927 to 951 (LIQL…IIER), 955 to 979 (LNQL…NQSS), 1013 to 1036 (NEKL…NESL), 1044 to 1068 (FENL…IIDV), 1138 to 1164 (LQDL…ELKE), and 1210 to 1232 (NAHL…GFNE). Residues 1272–1292 (RSSSSSLHQQQQMISPDLSNS) are disordered. Over residues 1274–1286 (SSSSLHQQQQMIS) the composition is skewed to low complexity. LRR repeat units follow at residues 1424–1444 (SSEK…KYFF) and 1445–1468 (AIAR…IFDM).

The protein is Putative leucine-rich repeat-containing protein DDB_G0290503 of Dictyostelium discoideum (Social amoeba).